Here is an 860-residue protein sequence, read N- to C-terminus: DNA mismatch repair protein MutS (860 aa).

607-614 (GPNMSGKS) contacts ATP.

The protein belongs to the DNA mismatch repair MutS family.

This protein is involved in the repair of mismatches in DNA. It is possible that it carries out the mismatch recognition step. This protein has a weak ATPase activity. This chain is DNA mismatch repair protein MutS, found in Listeria monocytogenes serotype 4b (strain CLIP80459).